The sequence spans 175 residues: Ribosome maturation factor RimM (175 aa).

The PRC barrel domain occupies 100–174; the sequence is EDEYYWNDVI…VKHKIITVIW (75 aa).

This sequence belongs to the RimM family. Binds ribosomal protein uS19.

It localises to the cytoplasm. Its function is as follows. An accessory protein needed during the final step in the assembly of 30S ribosomal subunit, possibly for assembly of the head region. Essential for efficient processing of 16S rRNA. May be needed both before and after RbfA during the maturation of 16S rRNA. It has affinity for free ribosomal 30S subunits but not for 70S ribosomes. The protein is Ribosome maturation factor RimM of Buchnera aphidicola subsp. Schizaphis graminum (strain Sg).